The following is a 30-amino-acid chain: Neurotoxin II.22.5 (30 aa).

The LCN-type CS-alpha/beta domain occupies 1 to 30 (KEGYIVNYHTGCKYTCAKLGDNDYCLRECK).

This sequence belongs to the long (4 C-C) scorpion toxin superfamily. Sodium channel inhibitor family. Beta subfamily. Expressed by the venom gland.

The protein resides in the secreted. In terms of biological role, binds to sodium channels (Nav) and inhibits the inactivation of the activated channels, thereby blocking neuronal transmission. This is Neurotoxin II.22.5 from Centruroides tecomanus (Scorpion).